The chain runs to 177 residues: Prorelaxin (177 aa).

A signal peptide spans 1-22 (MSCKFVLQLLGFWLLLSQPCRA). 3 disulfide bridges follow: C36–C164, C48–C177, and C163–C168. Positions 64-149 (MTEEAVSSFI…LKSLYLDTLS (86 aa)) are cleaved as a propeptide — connecting peptide. The segment at 80–114 (FDTMPNLSEKPKTALPEGHPSLPEQQQYVPVSSDS) is disordered. Polar residues predominate over residues 102-114 (PEQQQYVPVSSDS).

The protein belongs to the insulin family. Heterodimer of a B chain and an A chain linked by two disulfide bonds.

The protein localises to the secreted. Functionally, relaxin is an ovarian hormone that acts with estrogen to produce dilatation of the birth canal in many mammals. It bears mature young, and allows separation of the pelvic bones. The polypeptide is Prorelaxin (RLN) (Mesocricetus auratus (Golden hamster)).